Reading from the N-terminus, the 714-residue chain is Probable serine/threonine-protein kinase mkcB (714 aa).

Residues 1-12 (MKSILKKAKHFF) show a composition bias toward basic residues. Disordered stretches follow at residues 1 to 267 (MKSI…SSTS) and 281 to 349 (GSGS…EQKP). A compositionally biased stretch (basic and acidic residues) spans 23–35 (GGEKTAKESESQQ). The segment covering 62–83 (SQSQPTTSALQTSTSLQPSSSL) has biased composition (low complexity). Polar residues predominate over residues 84-94 (HQIPQSQSSLE). Composition is skewed to low complexity over residues 95 to 111 (LTTN…TKQL) and 120 to 166 (PHSQ…TLTT). Polar residues predominate over residues 167-177 (PVPSSENLATL). 2 stretches are compositionally biased toward low complexity: residues 178 to 241 (STST…QEQT) and 254 to 267 (LSQS…SSTS). The span at 282–294 (SGSTKNKDSSSAP) shows a compositional bias: polar residues. 2 stretches are compositionally biased toward low complexity: residues 300–314 (NNNN…KNRS) and 324–337 (NNNN…KNNN). The Protein kinase domain maps to 438-687 (YKDSDQVGKG…AEELLKHPFI (250 aa)). Residues 444–452 (VGKGGFGTV) and Lys467 each bind ATP. Catalysis depends on Asp558, which acts as the Proton acceptor.

It belongs to the protein kinase superfamily. STE Ser/Thr protein kinase family. STE20 subfamily. Mg(2+) is required as a cofactor. As to expression, expressed at equal levels in prestalk and prespore cells.

The catalysed reaction is L-seryl-[protein] + ATP = O-phospho-L-seryl-[protein] + ADP + H(+). It carries out the reaction L-threonyl-[protein] + ATP = O-phospho-L-threonyl-[protein] + ADP + H(+). This Dictyostelium discoideum (Social amoeba) protein is Probable serine/threonine-protein kinase mkcB.